The sequence spans 138 residues: Acid shock protein (138 aa).

An N-terminal signal peptide occupies residues 1-21; it reads MKKVLALIVAATMGLSSVAFA. A propeptide spanning residues 22–85 is cleaved from the precursor; that stretch reads ADAVAPAAAA…TKKAPAQKAQ (64 aa). The segment covering 31–50 has biased composition (low complexity); that stretch reads APAATTTAAPAAAATKAPAK. The tract at residues 31–138 is disordered; it reads APAATTTAAP…ATKKAAPAAK (108 aa). Basic residues-rich tracts occupy residues 51-77 and 122-131; these read ATHH…KATK and AAKKHHKATK.

It belongs to the Asr family. Post-translationally, proteolytic processing gives rise to the active protein.

It is found in the periplasm. Functionally, required for growth and/or survival at acidic conditions. The protein is Acid shock protein of Serratia proteamaculans (strain 568).